Consider the following 191-residue polypeptide: Imidazoleglycerol-phosphate dehydratase (191 aa).

The protein belongs to the imidazoleglycerol-phosphate dehydratase family.

Its subcellular location is the cytoplasm. It catalyses the reaction D-erythro-1-(imidazol-4-yl)glycerol 3-phosphate = 3-(imidazol-4-yl)-2-oxopropyl phosphate + H2O. It functions in the pathway amino-acid biosynthesis; L-histidine biosynthesis; L-histidine from 5-phospho-alpha-D-ribose 1-diphosphate: step 6/9. The chain is Imidazoleglycerol-phosphate dehydratase from Methanosarcina mazei (strain ATCC BAA-159 / DSM 3647 / Goe1 / Go1 / JCM 11833 / OCM 88) (Methanosarcina frisia).